The sequence spans 234 residues: MTERPKDIPEDKLVLYVVKATPTSTANTVKPLIVMNELSIDHEIYVVPSPTRDEWFHQINPHKMVPAIESAETRDGKRLNIWESTSCLTYLTDAYDHEGLWKGSDLWERTQVNNWLTLHTAALGATGKYWLYFSAIHPEKIPAVIEKLANNIKVQYDILERRLSEKGQKYIALPDRPTIADVANLPFVTEELALKAGLRLGDWPNLQAWSEKMLARPSVQKALSQKFRPSVMIR.

One can recognise a GST N-terminal domain in the interval 15–99 (LYVVKATPTS…YLTDAYDHEG (85 aa)). Positions 105–230 (DLWERTQVNN…KALSQKFRPS (126 aa)) constitute a GST C-terminal domain.

The protein belongs to the GST superfamily.

It catalyses the reaction RX + glutathione = an S-substituted glutathione + a halide anion + H(+). It participates in mycotoxin biosynthesis. Its function is as follows. Glutathione S-transferase; part of the gene cluster that mediates the biosynthesis of sirodesmin PL, an epipolythiodioxopiperazine (ETP) characterized by a disulfide bridged cyclic dipeptide and that acts as a phytotoxin which is involved in the blackleg didease of canola. SirD catalyzes the O-prenylation of L-tyrosine (L-Tyr) in the presence of dimethylallyl diphosphate (DMAPP) to yield 4-O-dimethylallyl-L-Tyr, and therefore represents probably the first pathway-specific enzyme in the biosynthesis of sirodesmin PL. 4-O-dimethylallyl-L-Tyr, then undergoes condensation with L-Ser in a reaction catalyzed by the non-ribosomal peptide synthase sirP to form the diketopiperazine (DKP) backbone. Further bishydroxylation of the DKP performed by the cytochrome P450 monooxygenase sirC leads to the production of the intermediate phomamide. This step is essential to form the reactive thiol group required for toxicity of sirodesmin PL. The next steps of sirodesmin biosynthesis are not well understood yet, but some predictions could be made from intermediate compounds identification. Phomamide is converted into phomalizarine via oxidation, probably by sirT. Further oxidation, methylation (by sirM or sirN) and reduction steps convert phomalizarine to deacetyl sirodesmin. Finally, acetyltransferase sirH probably acetylates deacetyl sirodesmin to produce sirodesmin PL. This Leptosphaeria maculans (Blackleg fungus) protein is Glutathione S-transferase sirG.